A 104-amino-acid polypeptide reads, in one-letter code: Large ribosomal subunit protein uL24 (104 aa).

This sequence belongs to the universal ribosomal protein uL24 family. In terms of assembly, part of the 50S ribosomal subunit.

In terms of biological role, one of two assembly initiator proteins, it binds directly to the 5'-end of the 23S rRNA, where it nucleates assembly of the 50S subunit. Its function is as follows. One of the proteins that surrounds the polypeptide exit tunnel on the outside of the subunit. The chain is Large ribosomal subunit protein uL24 from Shigella dysenteriae serotype 1 (strain Sd197).